Here is a 63-residue protein sequence, read N- to C-terminus: Large ribosomal subunit protein uL29 (63 aa).

It belongs to the universal ribosomal protein uL29 family.

This is Large ribosomal subunit protein uL29 from Shigella flexneri.